We begin with the raw amino-acid sequence, 205 residues long: Beta-crystallin B2 (205 aa).

A2 is subject to N-acetylalanine. The N-terminal arm stretch occupies residues 2–16 (ASDHQTQAGKPQPLN). Beta/gamma crystallin 'Greek key' domains follow at residues 17–56 (PKIIIFEQENFQGHSHELNGPCPNLKETGVEKAGSVLVQA) and 57–101 (GPWV…RPIK). The segment at 102–106 (VDSQE) is connecting peptide. Beta/gamma crystallin 'Greek key' domains follow at residues 107–148 (HKII…RVQS) and 149–191 (GTWV…RRIR). A C-terminal arm region spans residues 193–205 (MQWHQRGAFHPTN).

Belongs to the beta/gamma-crystallin family. In terms of assembly, homo/heterodimer, or complexes of higher-order. The structure of beta-crystallin oligomers seems to be stabilized through interactions between the N-terminal arms.

Its function is as follows. Crystallins are the dominant structural components of the vertebrate eye lens. This Oryctolagus cuniculus (Rabbit) protein is Beta-crystallin B2 (CRYBB2).